The chain runs to 1308 residues: Receptor tyrosine-protein kinase erbB-4 (1308 aa).

Positions 1 to 25 (MKLATGLWVWGSLLMAAGTVQPSAS) are cleaved as a signal peptide. Topologically, residues 26–652 (QSVCAGTENK…TLPQHARTPL (627 aa)) are extracellular. The cysteines at positions 29 and 56 are disulfide-linked. Residues Asn138, Asn174, and Asn181 are each glycosylated (N-linked (GlcNAc...) asparagine). 12 cysteine pairs are disulfide-bonded: Cys156–Cys186, Cys189–Cys197, Cys193–Cys205, Cys213–Cys221, Cys217–Cys229, Cys230–Cys238, Cys234–Cys246, Cys249–Cys258, Cys262–Cys289, Cys293–Cys304, Cys308–Cys323, and Cys326–Cys330. Asn253 carries N-linked (GlcNAc...) asparagine glycosylation. 3 N-linked (GlcNAc...) asparagine glycosylation sites follow: Asn410, Asn473, and Asn495. Disulfide bonds link Cys503-Cys512, Cys507-Cys520, Cys523-Cys532, Cys536-Cys552, Cys555-Cys569, Cys559-Cys577, Cys580-Cys589, Cys593-Cys614, Cys617-Cys625, and Cys621-Cys633. The N-linked (GlcNAc...) asparagine glycan is linked to Asn548. N-linked (GlcNAc...) asparagine glycosylation is present at Asn576. Asn620 carries N-linked (GlcNAc...) asparagine glycosylation. At 653 to 673 (IAAGVIGGLFILVIMALTFAV) the chain is embedded in the membrane. Topologically, residues 674-1308 (YVRRKSIKKK…PPYRHRNTVV (635 aa)) are cytoplasmic. Positions 676 to 684 (RRKSIKKKR) match the Nuclear localization signal motif. The Protein kinase domain maps to 718 to 985 (LKRVKVLGSG…RMARDPQRYL (268 aa)). ATP-binding positions include 724 to 732 (LGSGAFGTV), Lys751, 797 to 799 (QLM), and 843 to 848 (DLAARN). Catalysis depends on Asp843, which acts as the Proton acceptor. Phosphotyrosine; by autocatalysis is present on residues Tyr875, Tyr1035, and Tyr1056. The PPxy motif 1 motif lies at 1032–1035 (PPIY). Positions 1117–1149 (PHVQEDSSTQRYSADPTVFAPERNPRGELDEEG) are disordered. 7 positions are modified to phosphotyrosine; by autocatalysis: Tyr1150, Tyr1162, Tyr1188, Tyr1202, Tyr1242, Tyr1258, and Tyr1284. A PPxY motif 2 motif is present at residues 1282–1285 (PEYL). The PDZ-binding motif lies at 1290-1292 (LKP).

Belongs to the protein kinase superfamily. Tyr protein kinase family. EGF receptor subfamily. Monomer in the absence of bound ligand. Homodimer or heterodimer with another ERBB family member upon ligand binding, thus forming heterotetramers. Interacts with EGFR and ERBB2. Interacts with DLG2 (via its PDZ domain), DLG3 (via its PDZ domain), DLG4 (via its PDZ domain) and SNTB2 (via its PDZ domain). Interacts with MUC1. Interacts (via its PPxy motifs) with WWOX. Interacts (via the PPxY motif 3 of isoform JM-A CYT-2) with YAP1 (via the WW domain 1 of isoform 1). Interacts (isoform JM-A CYT-1 and isoform JM-B CYT-1) with WWP1. Interacts (via its intracellular domain) with TRIM28. Interacts (via the intracellular domains of both CYT-1 and CYT-2 isoforms) with KAP1; the interaction does not phosphorylate KAP1 but represses ERBB4-mediated transcriptional activity. Interacts with PRPU, DDX23, MATR3, RBM15, ILF3, KAP1, U5S1, U2SURP, ITCH, HNRNPU, AP2A1, NULC, LEO1, WWP2, IGHG1, HXK1, GRB7 and SRRT. Interacts (phosphorylated isoform JM-A CYT-1 and isoform JM-B CYT-1) with PIK3R1. Interacts with SHC1. Interacts with GRB2. Interacts (soluble intracellular domain) with BCL2. Interacts (phosphorylated) with STAT1. Interacts with CBFA2T3. Interacts (soluble intracellular domain) with STAT5A. Post-translationally, isoform JM-A CYT-1 and isoform JM-A CYT-2 are processed by ADAM17. Proteolytic processing in response to ligand or 12-O-tetradecanoylphorbol-13-acetate stimulation results in the production of 120 kDa soluble receptor forms and intermediate membrane-anchored 80 kDa fragments (m80HER4), which are further processed by a presenilin-dependent gamma-secretase to release a cytoplasmic intracellular domain (E4ICD; E4ICD1/s80Cyt1 or E4ICD2/s80Cyt2, depending on the isoform). Membrane-anchored 80 kDa fragments of the processed isoform JM-A CYT-1 are more readily degraded by the proteasome than fragments of isoform JM-A CYT-2, suggesting a prevalence of E4ICD2 over E4ICD1. Isoform JM-B CYT-1 and isoform JM-B CYT-2 lack the ADAM17 cleavage site and are not processed by ADAM17, precluding further processing by gamma-secretase. Autophosphorylated on tyrosine residues in response to ligand binding. Autophosphorylation occurs in trans, i.e. one subunit of the dimeric receptor phosphorylates tyrosine residues on the other subunit. Ligands trigger phosphorylation at specific tyrosine residues, thereby creating binding sites for scaffold proteins and effectors. Constitutively phosphorylated at a basal level when overexpressed in heterologous systems; ligand binding leads to increased phosphorylation. Phosphorylation at Tyr-1035 is important for interaction with STAT1. Phosphorylation at Tyr-1056 is important for interaction with PIK3R1. Phosphorylation at Tyr-1242 is important for interaction with SHC1. Phosphorylation at Tyr-1188 may also contribute to the interaction with SHC1. Isoform JM-A CYT-2 is constitutively phosphorylated on tyrosine residues in a ligand-independent manner. E4ICD2 but not E4ICD1 is phosphorylated on tyrosine residues. In terms of processing, ubiquitinated. During mitosis, the ERBB4 intracellular domain is ubiquitinated by the APC/C complex and targeted to proteasomal degradation. Isoform JM-A CYT-1 and isoform JM-B CYT-1 are ubiquitinated by WWP1. The ERBB4 intracellular domain (E4ICD1) is ubiquitinated, and this involves NEDD4. As to expression, isoform JM-A CYT-2 and isoform JM-B CYT-2 are expressed in cerebellum, cerebral cortex, spinal cord, medulla oblongata and eye, but the kidney expresses solely isoform JM-A CYT-2 and the heart solely isoform JM-B CYT-2.

Its subcellular location is the cell membrane. It is found in the nucleus. The protein localises to the mitochondrion. It catalyses the reaction L-tyrosyl-[protein] + ATP = O-phospho-L-tyrosyl-[protein] + ADP + H(+). Binding of a cognate ligand leads to dimerization and activation by autophosphorylation on tyrosine residues. In vitro kinase activity is increased by Mg(2+). Its function is as follows. Tyrosine-protein kinase that plays an essential role as cell surface receptor for neuregulins and EGF family members and regulates development of the heart, the central nervous system and the mammary gland, gene transcription, cell proliferation, differentiation, migration and apoptosis. Required for normal cardiac muscle differentiation during embryonic development, and for postnatal cardiomyocyte proliferation. Required for normal development of the embryonic central nervous system, especially for normal neural crest cell migration and normal axon guidance. Required for mammary gland differentiation, induction of milk proteins and lactation. Acts as cell-surface receptor for the neuregulins NRG1, NRG2, NRG3 and NRG4 and the EGF family members BTC, EREG and HBEGF. Ligand binding triggers receptor dimerization and autophosphorylation at specific tyrosine residues that then serve as binding sites for scaffold proteins and effectors. Ligand specificity and signaling is modulated by alternative splicing, proteolytic processing, and by the formation of heterodimers with other ERBB family members, thereby creating multiple combinations of intracellular phosphotyrosines that trigger ligand- and context-specific cellular responses. Mediates phosphorylation of SHC1 and activation of the MAP kinases MAPK1/ERK2 and MAPK3/ERK1. Isoform JM-A CYT-1 and isoform JM-B CYT-1 phosphorylate PIK3R1, leading to the activation of phosphatidylinositol 3-kinase and AKT1 and protect cells against apoptosis. Isoform JM-A CYT-1 and isoform JM-B CYT-1 mediate reorganization of the actin cytoskeleton and promote cell migration in response to NRG1. Isoform JM-A CYT-2 and isoform JM-B CYT-2 lack the phosphotyrosine that mediates interaction with PIK3R1, and hence do not phosphorylate PIK3R1, do not protect cells against apoptosis, and do not promote reorganization of the actin cytoskeleton and cell migration. Proteolytic processing of isoform JM-A CYT-1 and isoform JM-A CYT-2 gives rise to the corresponding soluble intracellular domains (4ICD) that translocate to the nucleus, promote nuclear import of STAT5A, activation of STAT5A, mammary epithelium differentiation, cell proliferation and activation of gene expression. The ERBB4 soluble intracellular domains (4ICD) colocalize with STAT5A at the CSN2 promoter to regulate transcription of milk proteins during lactation. The ERBB4 soluble intracellular domains can also translocate to mitochondria and promote apoptosis. This Mus musculus (Mouse) protein is Receptor tyrosine-protein kinase erbB-4 (Erbb4).